The chain runs to 246 residues: Anionic trypsin-2 (246 aa).

A signal peptide spans methionine 1–alanine 15. Positions phenylalanine 16–lysine 23 are cleaved as a propeptide — activation peptide. The region spanning isoleucine 24–alanine 244 is the Peptidase S1 domain. 6 disulfide bridges follow: cysteine 30/cysteine 160, cysteine 48/cysteine 64, cysteine 132/cysteine 233, cysteine 139/cysteine 206, cysteine 171/cysteine 185, and cysteine 196/cysteine 220. Histidine 63 functions as the Charge relay system in the catalytic mechanism. Ca(2+) is bound by residues glutamate 75, asparagine 77, valine 80, and glutamate 85. Aspartate 107 serves as the catalytic Charge relay system. The Charge relay system role is filled by serine 200.

This sequence belongs to the peptidase S1 family. The cofactor is Ca(2+). As to expression, expressed in the pancreas, lung and kidney.

It localises to the secreted. The protein resides in the extracellular space. The enzyme catalyses Preferential cleavage: Arg-|-Xaa, Lys-|-Xaa.. This Mus musculus (Mouse) protein is Anionic trypsin-2 (Prss2).